A 120-amino-acid chain; its full sequence is MHAISQIRLTFNQDRPDLHDDDSAGLAVQEAKPALQAPPMYKVVLFNDDYTPMDFVVEVLEMFFNLNRELATKVMLAVHTEGRAVCGLFTRDIAETKAMQVNQYARESQHPLLCEIEKDG.

It belongs to the ClpS family. Binds to the N-terminal domain of the chaperone ClpA.

Involved in the modulation of the specificity of the ClpAP-mediated ATP-dependent protein degradation. The chain is ATP-dependent Clp protease adapter protein ClpS from Pseudomonas fluorescens (strain ATCC BAA-477 / NRRL B-23932 / Pf-5).